The chain runs to 527 residues: EGF domain-specific O-linked N-acetylglucosamine transferase (527 aa).

A signal peptide spans 1 to 19 (MLMLLVFGVLLHEVPLSGQ). Residues 295–297 (DYD) carry the Required for optimal activity motif. N-linked (GlcNAc...) asparagine glycosylation occurs at Asn-354. The short motif at 524-527 (HDEL) is the Prevents secretion from ER element.

It belongs to the glycosyltransferase 61 family. As to expression, widely expressed. Expressed in brain, heart, kidney, lung, skeletal muscles and thymus. Highest expression is observed in lung and the lowest in skeletal muscles.

It localises to the endoplasmic reticulum lumen. It catalyses the reaction L-seryl-[protein] + UDP-N-acetyl-alpha-D-glucosamine = 3-O-(N-acetyl-beta-D-glucosaminyl)-L-seryl-[protein] + UDP + H(+). The catalysed reaction is L-threonyl-[protein] + UDP-N-acetyl-alpha-D-glucosamine = 3-O-(N-acetyl-beta-D-glucosaminyl)-L-threonyl-[protein] + UDP + H(+). In terms of biological role, catalyzes the transfer of a single N-acetylglucosamine from UDP-GlcNAc to a serine or threonine residue in extracellular proteins resulting in their modification with a beta-linked N-acetylglucosamine (O-GlcNAc). Specifically glycosylates the Thr residue located between the fifth and sixth conserved cysteines of folded EGF-like domains. The sequence is that of EGF domain-specific O-linked N-acetylglucosamine transferase (Eogt) from Mus musculus (Mouse).